The sequence spans 481 residues: MIKIETVLVILKEDHNFRDIVKGEEYFFSYSGLTFDSISYDSREADASTLFFVKGEAFKKEFLEKAVSVGLRFYISETDFQVGIPVLLVNDVKQAMSLLAMEFYGHPEKKLKLLAFTGTKGKTTTAYFTYQILSQSHRPALLSTMNTTLDGETFFKSTLTTPESLDLIKMMAQALANDRTHLIMEVSSQAYLKKRVYGLTFDVGVFLNISPDHIGPIEHPTFEDYFYNKRLLMDNSRAVIVNSGMDHFQIVKEQVASLEHDFYGADSSNTIKDSQAFSFEATGKLAGNYDIQLIGRFNQENAVAAGLACLRLGASLEDIKKGIAATRVPGRMEVLTQKNGAKVFVDYAHNGVSLRNLLSVVEEHQKGKIILLLGATGNKGESRRKDFGLLLNQHPELTVILTADDPNYEDPLAIAEEIASYISYPVEKIADREEAIKKALSLTEREGDAVILAGKGADAYQIVEGEKVAYPGDYALAEKYL.

A UDP-N-acetyl-alpha-D-muramoyl-L-alanyl-D-glutamate-binding site is contributed by serine 42. 118-124 (GTKGKTT) is a binding site for ATP. UDP-N-acetyl-alpha-D-muramoyl-L-alanyl-D-glutamate-binding positions include 160-161 (TT), serine 187, and arginine 195. Lysine 229 bears the N6-carboxylysine mark. The short motif at 404-407 (DDPN) is the L-lysine recognition motif element.

This sequence belongs to the MurCDEF family. MurE subfamily. Post-translationally, carboxylation is probably crucial for Mg(2+) binding and, consequently, for the gamma-phosphate positioning of ATP.

It is found in the cytoplasm. The enzyme catalyses UDP-N-acetyl-alpha-D-muramoyl-L-alanyl-D-glutamate + L-lysine + ATP = UDP-N-acetyl-alpha-D-muramoyl-L-alanyl-gamma-D-glutamyl-L-lysine + ADP + phosphate + H(+). The protein operates within cell wall biogenesis; peptidoglycan biosynthesis. Its function is as follows. Catalyzes the addition of L-lysine to the nucleotide precursor UDP-N-acetylmuramoyl-L-alanyl-D-glutamate (UMAG) in the biosynthesis of bacterial cell-wall peptidoglycan. The polypeptide is UDP-N-acetylmuramoyl-L-alanyl-D-glutamate--L-lysine ligase (Streptococcus sanguinis (strain SK36)).